The sequence spans 124 residues: Putative iron-sulfur cluster insertion protein ErpA (124 aa).

Iron-sulfur cluster-binding residues include cysteine 49, cysteine 113, and cysteine 115.

The protein belongs to the HesB/IscA family. In terms of assembly, homodimer. Iron-sulfur cluster is required as a cofactor.

Required for insertion of 4Fe-4S clusters. The polypeptide is Putative iron-sulfur cluster insertion protein ErpA (Acidovorax sp. (strain JS42)).